A 100-amino-acid polypeptide reads, in one-letter code: Ribosomal biogenesis factor (100 aa).

Ser19 carries the post-translational modification Phosphoserine. Lys21 is modified (N6-acetyllysine). Ser69 is subject to Phosphoserine.

Associates with the pre-60S ribosomal particles.

It localises to the nucleus. It is found in the nucleolus. Its function is as follows. Trans-acting factor in ribosome biogenesis required for efficient 40S and 60S subunit production. The chain is Ribosomal biogenesis factor (RBIS) from Bos taurus (Bovine).